Consider the following 848-residue polypeptide: DNA-binding protein RFX6 (848 aa).

A DNA-binding region (RFX-type winged-helix) is located at residues 56–131 (TLQWLEDNYI…YHYYGIGIKE (76 aa)).

This sequence belongs to the RFX family. Expressed in progenitors and hormone expressing cells of the islet lineage.

It localises to the nucleus. Transcription factor required to direct islet cell differentiation during endocrine pancreas development. The protein is DNA-binding protein RFX6 (rfx6) of Danio rerio (Zebrafish).